The following is a 257-amino-acid chain: UPF0246 protein BT_3869 (257 aa).

This sequence belongs to the UPF0246 family.

The sequence is that of UPF0246 protein BT_3869 from Bacteroides thetaiotaomicron (strain ATCC 29148 / DSM 2079 / JCM 5827 / CCUG 10774 / NCTC 10582 / VPI-5482 / E50).